Consider the following 684-residue polypeptide: Probable potassium transport system protein Kup (684 aa).

Helical transmembrane passes span 19–39, 61–81, 104–124, 151–171, 177–197, 223–243, 255–275, 303–323, 352–372, 381–401, 407–427, and 433–453; these read ALLVTLGVVYGDIGTSPLYVM, VSLIFWTLLIITTVKYVLIAL, WLVLPAMVGGAALLADGMLTP, QVIWVTILIITFLFFIQRFGT, AFGPIMFVWFTFLGVAGFIAL, MGLFILGSIFLATTGAEALYS, LSWPYVNICLVLNYFGQAVWL, LGAIILATLAAIIASQALISG, LYIPVVNTILWLACLAIIGYF, AYGLAITITMLMTTLLLYQYL, PAVIAIGTLIFFSAIETVFFI, and FLHGGYVTAMIAFIILAVMYV.

It belongs to the HAK/KUP transporter (TC 2.A.72) family.

The protein resides in the cell membrane. The enzyme catalyses K(+)(in) + H(+)(in) = K(+)(out) + H(+)(out). In terms of biological role, transport of potassium into the cell. Likely operates as a K(+):H(+) symporter. This chain is Probable potassium transport system protein Kup, found in Lacticaseibacillus casei (strain BL23) (Lactobacillus casei).